The chain runs to 361 residues: Transcription factor TCP10 (361 aa).

The region spanning 29 to 87 (RKDRHSKVFTSKGPRDRRVRLSAHTAIQFYDVQDRLGYDRPSKAVDWLIKKAKTAIDKL) is the TCP domain. Disordered stretches follow at residues 220–259 (DLTM…QPSM) and 295–317 (SWDH…SMFA). Positions 295–304 (SWDHHQTTSD) are enriched in basic and acidic residues.

As to quaternary structure, interacts with AHP1, AHP2 and AHP3. Interacts with SPL. Mostly detected in lateral organs, such as leaves and flowers. Expressed in cotyledons, particularly in the vascular region, in leaves, roots, stems, buds, flowers and immature siliques.

It is found in the nucleus. Plays a pivotal role in the control of morphogenesis of shoot organs by negatively regulating the expression of boundary-specific genes such as CUC genes, probably through the induction of miRNA (e.g. miR164). Participates in ovule development. The protein is Transcription factor TCP10 (TCP10) of Arabidopsis thaliana (Mouse-ear cress).